The primary structure comprises 242 residues: Small ribosomal subunit protein uS2 (242 aa).

This sequence belongs to the universal ribosomal protein uS2 family.

This chain is Small ribosomal subunit protein uS2, found in Idiomarina loihiensis (strain ATCC BAA-735 / DSM 15497 / L2-TR).